A 175-amino-acid polypeptide reads, in one-letter code: ADP-ribosylation factor 6 (175 aa).

A lipid anchor (N-myristoyl glycine) is attached at G2. K3 is lipidated: N6-myristoyl lysine. Residues 23–28, 41–44, 63–67, 122–125, and 155–156 each bind GTP; these read AAGKTT, TIPT, DVGGQ, NKQD, and CA.

The protein belongs to the small GTPase superfamily. Arf family.

It is found in the cytoplasm. Its subcellular location is the cytosol. The protein resides in the cell membrane. It localises to the endosome membrane. The protein localises to the recycling endosome membrane. It is found in the cell projection. Its subcellular location is the filopodium membrane. The protein resides in the ruffle. It localises to the cleavage furrow. The protein localises to the midbody. It is found in the midbody ring. Its subcellular location is the golgi apparatus. The enzyme catalyses GTP + H2O = GDP + phosphate + H(+). GTP-binding protein involved in protein trafficking; regulates endocytic recycling and cytoskeleton remodeling. May modulate vesicle budding and uncoating within the Golgi apparatus. May contribute to the regulation of dendritic branching, filopodia extension and dendritic spine development. In Xenopus laevis (African clawed frog), this protein is ADP-ribosylation factor 6 (arf6).